We begin with the raw amino-acid sequence, 270 residues long: Phthiotriol/phenolphthiotriol dimycocerosates methyltransferase (270 aa).

This sequence belongs to the methyltransferase superfamily. Phthiotriol/phenolphthiotriol dimycocerosates methyltransferase family.

In terms of biological role, catalyzes the methylation of the lipid moiety of the intermediate compounds phthiotriol and glycosylated phenolphthiotriol dimycoserosates to form phthiocerol dimycocerosates (DIM A) and glycosylated phenolphthiocerol dimycocerosates (PGL). This Mycobacterium bovis (strain ATCC BAA-935 / AF2122/97) protein is Phthiotriol/phenolphthiotriol dimycocerosates methyltransferase.